A 336-amino-acid polypeptide reads, in one-letter code: Aspartate carbamoyltransferase catalytic subunit (336 aa).

R72 and T73 together coordinate carbamoyl phosphate. K100 provides a ligand contact to L-aspartate. Positions 122, 155, and 158 each coordinate carbamoyl phosphate. Residues R188 and R242 each coordinate L-aspartate. 2 residues coordinate carbamoyl phosphate: G288 and P289.

Belongs to the aspartate/ornithine carbamoyltransferase superfamily. ATCase family. In terms of assembly, heterododecamer (2C3:3R2) of six catalytic PyrB chains organized as two trimers (C3), and six regulatory PyrI chains organized as three dimers (R2).

The catalysed reaction is carbamoyl phosphate + L-aspartate = N-carbamoyl-L-aspartate + phosphate + H(+). It participates in pyrimidine metabolism; UMP biosynthesis via de novo pathway; (S)-dihydroorotate from bicarbonate: step 2/3. Catalyzes the condensation of carbamoyl phosphate and aspartate to form carbamoyl aspartate and inorganic phosphate, the committed step in the de novo pyrimidine nucleotide biosynthesis pathway. This chain is Aspartate carbamoyltransferase catalytic subunit, found in Lactobacillus leichmannii.